The sequence spans 72 residues: Protein kish-A (72 aa).

The signal sequence occupies residues 1-26; it reads MSAIFNFQSLLIVILLLICTCAYLRA. Residues 27 to 53 are Extracellular-facing; the sequence is LVPNLLDKNKTGILGIFWKCARIGERK. Residue Asn35 is glycosylated (N-linked (GlcNAc...) asparagine). A helical transmembrane segment spans residues 54-71; it reads SPYVAVCCVVMAFSILFM. A topological domain (cytoplasmic) is located at residue Gln72.

The protein belongs to the KISH family.

It is found in the golgi apparatus membrane. Its function is as follows. Involved in the early part of the secretory pathway. The sequence is that of Protein kish-A (tmem167a) from Xenopus tropicalis (Western clawed frog).